Here is a 416-residue protein sequence, read N- to C-terminus: Glutamyl-tRNA reductase (416 aa).

Substrate contacts are provided by residues 50 to 53 (TCNR), S109, 114 to 116 (EPQ), and Q120. C51 acts as the Nucleophile in catalysis. 189–194 (GAGEMI) is an NADP(+) binding site.

This sequence belongs to the glutamyl-tRNA reductase family. In terms of assembly, homodimer.

It carries out the reaction (S)-4-amino-5-oxopentanoate + tRNA(Glu) + NADP(+) = L-glutamyl-tRNA(Glu) + NADPH + H(+). The protein operates within porphyrin-containing compound metabolism; protoporphyrin-IX biosynthesis; 5-aminolevulinate from L-glutamyl-tRNA(Glu): step 1/2. Its function is as follows. Catalyzes the NADPH-dependent reduction of glutamyl-tRNA(Glu) to glutamate 1-semialdehyde (GSA). The protein is Glutamyl-tRNA reductase of Vesicomyosocius okutanii subsp. Calyptogena okutanii (strain HA).